The chain runs to 475 residues: MSPKTETKASVGFKAGVKDYRLTYYTPEYQTKDTDILAAFRVTPQPGVPPEEAGAAVAAESSTGTWTTVWTDGLTSLDRYKGRCYDIEPVAGEETQFIAYVAYPLDLFEEGSVTNLFTSIVGNVFGFKALRALRLEDLRIPPAYSKTFQGPPHGIQVERDKLNKYGRPLLGCTIKPKLGLSAKNYGRAVYECLRGGLDFTKDDENVNSQPFMRWRDRFVFCAEAIYKAQAETGEIKGHYLNATAGTCEEMMKRAIFARELGVPIVMHDYLTGGFTANTSLAHYCRDNGLLLHIHRAMHAVIDRQRIHGMHFRVLAKALRMSGGDHIHAGTVVGKLEGERDVTLGFVDLLRDDFIEKDRSRGIYFTQDWVSMPGVLPVASGGIHVWHMPALTEIFGDDSVLQFGGGTLGHPWGNAPGAVANRVALEACVQARNEGRDLAREGNEVIREACKWSPELAAACEIWKEIKFEFDVIDRL.

The propeptide occupies 1 to 2; that stretch reads MS. Position 3 is an N-acetylproline (P3). K14 carries the N6,N6,N6-trimethyllysine modification. Substrate is bound by residues N123 and T173. The Proton acceptor role is filled by K175. K177 is a substrate binding site. 3 residues coordinate Mg(2+): K201, D203, and E204. The residue at position 201 (K201) is an N6-carboxylysine. H294 acts as the Proton acceptor in catalysis. Substrate-binding residues include R295, H327, and S379.

The protein belongs to the RuBisCO large chain family. Type I subfamily. In terms of assembly, heterohexadecamer of 8 large chains and 8 small chains; disulfide-linked. The disulfide link is formed within the large subunit homodimers. Requires Mg(2+) as cofactor. In terms of processing, the disulfide bond which can form in the large chain dimeric partners within the hexadecamer appears to be associated with oxidative stress and protein turnover.

It localises to the plastid. Its subcellular location is the chloroplast. The enzyme catalyses 2 (2R)-3-phosphoglycerate + 2 H(+) = D-ribulose 1,5-bisphosphate + CO2 + H2O. It carries out the reaction D-ribulose 1,5-bisphosphate + O2 = 2-phosphoglycolate + (2R)-3-phosphoglycerate + 2 H(+). RuBisCO catalyzes two reactions: the carboxylation of D-ribulose 1,5-bisphosphate, the primary event in carbon dioxide fixation, as well as the oxidative fragmentation of the pentose substrate in the photorespiration process. Both reactions occur simultaneously and in competition at the same active site. The sequence is that of Ribulose bisphosphate carboxylase large chain from Pinus radiata (Monterey pine).